A 263-amino-acid chain; its full sequence is Small ribosomal subunit protein eS4 (263 aa).

In terms of domain architecture, S4 RNA-binding spans L42–D104.

This sequence belongs to the eukaryotic ribosomal protein eS4 family.

This Gorilla gorilla gorilla (Western lowland gorilla) protein is Small ribosomal subunit protein eS4 (RPS4Y1).